We begin with the raw amino-acid sequence, 168 residues long: Sec-independent protein translocase protein TatB (168 aa).

Residues 1-21 (MIDLGISKLALIGAVALIVIG) form a helical membrane-spanning segment.

It belongs to the TatB family. The Tat system comprises two distinct complexes: a TatABC complex, containing multiple copies of TatA, TatB and TatC subunits, and a separate TatA complex, containing only TatA subunits. Substrates initially bind to the TatABC complex, which probably triggers association of the separate TatA complex to form the active translocon.

The protein localises to the cell inner membrane. Functionally, part of the twin-arginine translocation (Tat) system that transports large folded proteins containing a characteristic twin-arginine motif in their signal peptide across membranes. Together with TatC, TatB is part of a receptor directly interacting with Tat signal peptides. TatB may form an oligomeric binding site that transiently accommodates folded Tat precursor proteins before their translocation. The sequence is that of Sec-independent protein translocase protein TatB from Cupriavidus pinatubonensis (strain JMP 134 / LMG 1197) (Cupriavidus necator (strain JMP 134)).